Here is a 448-residue protein sequence, read N- to C-terminus: DEAD-box ATP-dependent RNA helicase CshB (448 aa).

Residues 4 to 32 (HPFEQFNLESSLIDAVKDLNFEKPTEIQN) carry the Q motif motif. A Helicase ATP-binding domain is found at 35–206 (IPRILKRTNL…NKYLSHPEYV (172 aa)). 48 to 55 (SQTGTGKS) serves as a coordination point for ATP. The short motif at 154–157 (DEAD) is the DEAD box element. Residues 236–386 (NLIDILNPYL…EVKAHNQRQA (151 aa)) enclose the Helicase C-terminal domain. Positions 400–418 (NKVRSKIKNKVKPGYKKKF) are enriched in basic residues. Positions 400–448 (NKVRSKIKNKVKPGYKKKFKQEVEKMKRQERKQFSKQQNRQKRKQNKKG) are disordered. Residues 419-432 (KQEVEKMKRQERKQ) show a composition bias toward basic and acidic residues. Over residues 438–448 (NRQKRKQNKKG) the composition is skewed to basic residues.

It belongs to the DEAD box helicase family. CshB subfamily.

The protein localises to the cytoplasm. The catalysed reaction is ATP + H2O = ADP + phosphate + H(+). Probable DEAD-box RNA helicase. May work in conjunction with the cold shock proteins to ensure proper initiation of transcription at low and optimal temperatures. The sequence is that of DEAD-box ATP-dependent RNA helicase CshB from Staphylococcus aureus (strain NCTC 8325 / PS 47).